The sequence spans 92 residues: DNA-directed RNA polymerase subunit omega (92 aa).

The protein belongs to the RNA polymerase subunit omega family. In terms of assembly, the RNAP catalytic core consists of 2 alpha, 1 beta, 1 beta' and 1 omega subunit. When a sigma factor is associated with the core the holoenzyme is formed, which can initiate transcription.

The enzyme catalyses RNA(n) + a ribonucleoside 5'-triphosphate = RNA(n+1) + diphosphate. Promotes RNA polymerase assembly. Latches the N- and C-terminal regions of the beta' subunit thereby facilitating its interaction with the beta and alpha subunits. The polypeptide is DNA-directed RNA polymerase subunit omega (Shewanella amazonensis (strain ATCC BAA-1098 / SB2B)).